The sequence spans 517 residues: Ribose import ATP-binding protein RbsA 1 (517 aa).

ABC transporter domains lie at 11-251 and 263-507; these read LEMR…VGRD and YDPG…ALAT. Position 43–50 (43–50) interacts with ATP; that stretch reads GENGAGKS.

Belongs to the ABC transporter superfamily. Ribose importer (TC 3.A.1.2.1) family. The complex is composed of an ATP-binding protein (RbsA), two transmembrane proteins (RbsC) and a solute-binding protein (RbsB).

Its subcellular location is the cell inner membrane. The catalysed reaction is D-ribose(out) + ATP + H2O = D-ribose(in) + ADP + phosphate + H(+). Functionally, part of the ABC transporter complex RbsABC involved in ribose import. Responsible for energy coupling to the transport system. The protein is Ribose import ATP-binding protein RbsA 1 of Burkholderia ambifaria (strain ATCC BAA-244 / DSM 16087 / CCUG 44356 / LMG 19182 / AMMD) (Burkholderia cepacia (strain AMMD)).